The sequence spans 788 residues: Integrin beta-6 (788 aa).

Residues 1 to 21 form the signal peptide; it reads MGIELLCFFFLFLGRDDHVRG. One can recognise a PSI domain in the interval 22 to 71; that stretch reads GCAMEGAETCGDCLLIGPQCAWCSQENFTHPSGVSERCDTPANLLAKGCQ. Residues 22-709 are Extracellular-facing; sequence GCAMEGAETC…KDCPKPPNIP (688 aa). Disulfide bonds link cysteine 23–cysteine 41, cysteine 31–cysteine 454, cysteine 34–cysteine 59, cysteine 44–cysteine 70, cysteine 197–cysteine 204, cysteine 252–cysteine 293, cysteine 394–cysteine 406, cysteine 426–cysteine 452, cysteine 456–cysteine 476, cysteine 467–cysteine 479, cysteine 481–cysteine 490, cysteine 492–cysteine 519, cysteine 502–cysteine 517, cysteine 511–cysteine 522, cysteine 524–cysteine 537, cysteine 539–cysteine 560, cysteine 544–cysteine 558, cysteine 552–cysteine 563, and cysteine 565–cysteine 574. Asparagine 48 and asparagine 97 each carry an N-linked (GlcNAc...) asparagine glycan. The 241-residue stretch at 131–371 folds into the VWFA domain; it reads YPVDLYYLMD…QLIISAYEEL (241 aa). Mg(2+) is bound by residues aspartate 140, serine 142, and serine 144. 4 residues coordinate Ca(2+): serine 144, aspartate 147, aspartate 148, and glutamate 179. Residues asparagine 235, aspartate 237, proline 239, and glutamate 240 each coordinate Ca(2+). Glutamate 240 is a binding site for Mg(2+). Asparagine 260 is a glycosylation site (N-linked (GlcNAc...) asparagine). The Ca(2+) site is built by aspartate 271 and lysine 355. N-linked (GlcNAc...) asparagine glycosylation is found at asparagine 387, asparagine 396, and asparagine 418. 4 consecutive I-EGF domains span residues 456–491, 492–538, 539–575, and 576–615; these read CQKEVEVNSSKCHNGNGSYQCGVCACNPGHMGPHCE, CGED…PYCQ, CDNFSCVRHKGLLCGDNGDCECGECVCRSGWTGEYCN, and CTTSTDTCISEDGTLCSGRGDCVCGKCVCTNPGASGPTCE. N-linked (GlcNAc...) asparagine glycans are attached at residues asparagine 463 and asparagine 471. Residue asparagine 541 is glycosylated (N-linked (GlcNAc...) asparagine). Residue asparagine 575 is glycosylated (N-linked (GlcNAc...) asparagine). Cystine bridges form between cysteine 576-cysteine 599, cysteine 583-cysteine 597, cysteine 591-cysteine 602, cysteine 604-cysteine 614, cysteine 617-cysteine 620, cysteine 624-cysteine 670, cysteine 630-cysteine 649, cysteine 633-cysteine 645, and cysteine 678-cysteine 702. N-linked (GlcNAc...) asparagine glycosylation is present at asparagine 696. Residues 710–730 traverse the membrane as a helical segment; the sequence is MIMLGVSLAILLIGVVLLCIW. Positions 731–758 are interaction with HAX1; the sequence is KLLVSFHDRKEVAKFEAERSKAKWQTGT. Over 731-788 the chain is Cytoplasmic; that stretch reads KLLVSFHDRKEVAKFEAERSKAKWQTGTNPLYRGSTSTFKNVTYKHRDKLKTDLSTDG.

It belongs to the integrin beta chain family. In terms of assembly, heterodimer of an alpha and a beta subunit. Interacts with FLNB. Interacts with HAX1. ITGAV:ITGB6 interacts with FBN1. ITGAV:ITGB6 interacts with TGFB1.

It is found in the cell membrane. The protein resides in the cell junction. The protein localises to the focal adhesion. In terms of biological role, integrin alpha-V:beta-6 (ITGAV:ITGB6) is a receptor for fibronectin and cytotactin. It recognizes the sequence R-G-D in its ligands. ITGAV:ITGB6 acts as a receptor for fibrillin-1 (FBN1) and mediates R-G-D-dependent cell adhesion to FBN1. Integrin alpha-V:beta-6 (ITGAV:ITGB6) mediates R-G-D-dependent release of transforming growth factor beta-1 (TGF-beta-1) from regulatory Latency-associated peptide (LAP), thereby playing a key role in TGF-beta-1 activation. The protein is Integrin beta-6 (ITGB6) of Cavia porcellus (Guinea pig).